An 83-amino-acid polypeptide reads, in one-letter code: Mu-theraphotoxin-Hhn2m (83 aa).

The N-terminal stretch at 1–21 is a signal peptide; the sequence is MKASMFLALAGLVLLFVVGYA. Residues 22–48 constitute a propeptide that is removed on maturation; sequence SESEEKEFPIELLSKIFAVDVFKGEER. 3 cysteine pairs are disulfide-bonded: Cys50–Cys65, Cys57–Cys70, and Cys64–Cys77. Leu81 is subject to Leucine amide.

It belongs to the neurotoxin 10 (Hwtx-1) family. 15 (Hntx-3) subfamily. As to quaternary structure, monomer. Expressed by the venom gland.

It localises to the secreted. Lethal neurotoxin. Selectively blocks tetrodotoxin-sensitive voltage-gated sodium channels (Nav). Does not affect tetrodotoxin-resistant voltage-gated sodium channels or calcium channels. This Cyriopagopus hainanus (Chinese bird spider) protein is Mu-theraphotoxin-Hhn2m.